Consider the following 332-residue polypeptide: Holliday junction branch migration complex subunit RuvB (332 aa).

A large ATPase domain (RuvB-L) region spans residues 1 to 181 (MSRILDNEIM…FGITGHMEYY (181 aa)). ATP is bound by residues leucine 20, arginine 21, glycine 62, lysine 65, threonine 66, threonine 67, 128–130 (EDF), arginine 171, tyrosine 181, and arginine 218. Mg(2+) is bound at residue threonine 66. The tract at residues 182 to 252 (AHAGLTEIVE…ITDKALTMLD (71 aa)) is small ATPAse domain (RuvB-S). A head domain (RuvB-H) region spans residues 255–332 (HEGLDYVDQK…EHLGYEYSEK (78 aa)). DNA contacts are provided by arginine 291, arginine 310, arginine 312, and arginine 315.

It belongs to the RuvB family. As to quaternary structure, homohexamer. Forms an RuvA(8)-RuvB(12)-Holliday junction (HJ) complex. HJ DNA is sandwiched between 2 RuvA tetramers; dsDNA enters through RuvA and exits via RuvB. An RuvB hexamer assembles on each DNA strand where it exits the tetramer. Each RuvB hexamer is contacted by two RuvA subunits (via domain III) on 2 adjacent RuvB subunits; this complex drives branch migration. In the full resolvosome a probable DNA-RuvA(4)-RuvB(12)-RuvC(2) complex forms which resolves the HJ.

The protein localises to the cytoplasm. The enzyme catalyses ATP + H2O = ADP + phosphate + H(+). Its function is as follows. The RuvA-RuvB-RuvC complex processes Holliday junction (HJ) DNA during genetic recombination and DNA repair, while the RuvA-RuvB complex plays an important role in the rescue of blocked DNA replication forks via replication fork reversal (RFR). RuvA specifically binds to HJ cruciform DNA, conferring on it an open structure. The RuvB hexamer acts as an ATP-dependent pump, pulling dsDNA into and through the RuvAB complex. RuvB forms 2 homohexamers on either side of HJ DNA bound by 1 or 2 RuvA tetramers; 4 subunits per hexamer contact DNA at a time. Coordinated motions by a converter formed by DNA-disengaged RuvB subunits stimulates ATP hydrolysis and nucleotide exchange. Immobilization of the converter enables RuvB to convert the ATP-contained energy into a lever motion, pulling 2 nucleotides of DNA out of the RuvA tetramer per ATP hydrolyzed, thus driving DNA branch migration. The RuvB motors rotate together with the DNA substrate, which together with the progressing nucleotide cycle form the mechanistic basis for DNA recombination by continuous HJ branch migration. Branch migration allows RuvC to scan DNA until it finds its consensus sequence, where it cleaves and resolves cruciform DNA. The sequence is that of Holliday junction branch migration complex subunit RuvB from Streptococcus pneumoniae (strain JJA).